A 261-amino-acid chain; its full sequence is 1-(5-phosphoribosyl)-5-[(5-phosphoribosylamino)methylideneamino] imidazole-4-carboxamide isomerase (261 aa).

The active-site Proton acceptor is the Asp15. Catalysis depends on Asp136, which acts as the Proton donor.

This sequence belongs to the HisA/HisF family.

The protein localises to the cytoplasm. It catalyses the reaction 1-(5-phospho-beta-D-ribosyl)-5-[(5-phospho-beta-D-ribosylamino)methylideneamino]imidazole-4-carboxamide = 5-[(5-phospho-1-deoxy-D-ribulos-1-ylimino)methylamino]-1-(5-phospho-beta-D-ribosyl)imidazole-4-carboxamide. Its pathway is amino-acid biosynthesis; L-histidine biosynthesis; L-histidine from 5-phospho-alpha-D-ribose 1-diphosphate: step 4/9. In Synechococcus sp. (strain JA-3-3Ab) (Cyanobacteria bacterium Yellowstone A-Prime), this protein is 1-(5-phosphoribosyl)-5-[(5-phosphoribosylamino)methylideneamino] imidazole-4-carboxamide isomerase.